We begin with the raw amino-acid sequence, 307 residues long: Taste receptor type 2 member 10 (307 aa).

Topologically, residues Met1 to Glu6 are extracellular. The chain crosses the membrane as a helical span at residues Gly7 to Ile27. Residues Gly28–Thr42 are Cytoplasmic-facing. The helical transmembrane segment at Ile43 to Thr63 threads the bilayer. Over Asp64–Thr100 the chain is Extracellular. Asn92 carries N-linked (GlcNAc...) asparagine glycosylation. The helical transmembrane segment at Ser101–Leu121 threads the bilayer. Topologically, residues Lys122 to Asn126 are cytoplasmic. Residues Arg127–Ile147 form a helical membrane-spanning segment. Over Val148 to Asn179 the chain is Extracellular. N-linked (GlcNAc...) asparagine glycosylation is present at Asn158. A helical transmembrane segment spans residues Leu180–Leu200. The Cytoplasmic portion of the chain corresponds to Trp201–Lys227. A helical membrane pass occupies residues Val228–Ser248. Over Tyr249–Leu257 the chain is Extracellular. The chain crosses the membrane as a helical span at residues Leu258 to Ile278. The Cytoplasmic portion of the chain corresponds to Leu279 to Thr307.

This sequence belongs to the G-protein coupled receptor T2R family.

The protein resides in the membrane. Its function is as follows. Receptor that may play a role in the perception of bitterness and is gustducin-linked. May play a role in sensing the chemical composition of the gastrointestinal content. The activity of this receptor may stimulate alpha gustducin, mediate PLC-beta-2 activation and lead to the gating of TRPM5. The protein is Taste receptor type 2 member 10 (TAS2R10) of Papio hamadryas (Hamadryas baboon).